The chain runs to 180 residues: ATP-dependent protease subunit HslV (180 aa).

T7 is a catalytic residue. Residues A165, C168, and T171 each coordinate Na(+).

Belongs to the peptidase T1B family. HslV subfamily. As to quaternary structure, a double ring-shaped homohexamer of HslV is capped on each side by a ring-shaped HslU homohexamer. The assembly of the HslU/HslV complex is dependent on binding of ATP.

It localises to the cytoplasm. The enzyme catalyses ATP-dependent cleavage of peptide bonds with broad specificity.. With respect to regulation, allosterically activated by HslU binding. Its function is as follows. Protease subunit of a proteasome-like degradation complex believed to be a general protein degrading machinery. The protein is ATP-dependent protease subunit HslV of Geobacillus sp. (strain WCH70).